Here is a 559-residue protein sequence, read N- to C-terminus: WD repeat-containing protein JIP5 (559 aa).

9 WD repeats span residues 26–67 (QYSD…NYLQ), 77–116 (ADGK…WKTK), 117–156 (RHKG…VVKK), 162–201 (DNGG…ETNR), 207–247 (NGDD…ESDF), 265–306 (DQED…LEDQ), 313–347 (AKEE…DIKK), 354–394 (RNHS…SEEE), and 428–470 (DSDG…SDDE). Disordered stretches follow at residues 386-500 (SRNE…LIGL) and 515-559 (EESE…FEGL). A compositionally biased stretch (acidic residues) spans 391 to 417 (SEEEDDEESESFSDSDSDSDSDSDSDS). A compositionally biased stretch (basic and acidic residues) spans 418-428 (DSDRDRDRDSD). The span at 482–494 (DMDDIDEGSDSSE) shows a compositional bias: acidic residues. The span at 520–534 (EGEKLQKKRKNEPSK) shows a compositional bias: basic and acidic residues. Basic residues predominate over residues 535–544 (KNTKNLKKVK).

It belongs to the WD repeat WDR55 family.

It localises to the nucleus. Its subcellular location is the nucleolus. This Vanderwaltozyma polyspora (strain ATCC 22028 / DSM 70294 / BCRC 21397 / CBS 2163 / NBRC 10782 / NRRL Y-8283 / UCD 57-17) (Kluyveromyces polysporus) protein is WD repeat-containing protein JIP5 (JIP5).